The sequence spans 503 residues: MSADPTVPQLLVPLAEIGDRGIYFEDSFTSWADHIGHGAAIAAALRERLDPTRPPHVGVLLQNTPFFSAMLAAAGMSGIIPVGLNPVRRGAALARDIEHADCQMVLADTASASTLDGIEHVNVDSAEWAEVIDAHRNSEISFQNAAPADLFMLIYTSGTSGDPKAVKCSHSKVAIAGVTMTQRFGLGRDDVCYVSMPLFHSNAVLVGWAVAVACQGSMALRRKFSASQFLSDVRRYGATYANYVGKPLSYVLATPERPDDADNPLRAVYGNEGVPGDSERFGCRFGCVVQDGFGSTEGGVAIARTPDTPAGSLGPLPENIEILDPETGQQCPVGAVGELVNTAGPGRFEGYYNDEAASAQRMSGGVYHSGDLAYRDAAGYAYFAGRLGDWMRVDGENLGTAPIERVLLRYPDAIEVAVYAIPDPVVGDQVMAAMVLTPGAKFDVDKFRAFLAGQSDLGPKQWPSYVRICSALPRTETFKVLKRQLAADGVDCGDPVWPIRDQS.

The protein belongs to the ATP-dependent AMP-binding enzyme family.

It carries out the reaction a medium-chain fatty acid + ATP + CoA = a medium-chain fatty acyl-CoA + AMP + diphosphate. The catalysed reaction is a long-chain fatty acid + ATP + CoA = a long-chain fatty acyl-CoA + AMP + diphosphate. The protein operates within lipid metabolism; fatty acid biosynthesis. In terms of biological role, catalyzes the activation of medium/long-chain fatty acids as acyl-coenzyme A (acyl-CoA), which are then transferred to the multifunctional polyketide synthase (PKS) type III for further chain extension. The chain is Medium/long-chain-fatty-acid--CoA ligase FadD17 (fadD17) from Mycobacterium marinum (strain ATCC BAA-535 / M).